The chain runs to 55 residues: Large ribosomal subunit protein bL33 (55 aa).

The span at 1–10 shows a compositional bias: basic and acidic residues; the sequence is MAKGGREKIK. A disordered region spans residues 1-27; that stretch reads MAKGGREKIKLQSTAGTGHFYTTDKNK.

It belongs to the bacterial ribosomal protein bL33 family.

The chain is Large ribosomal subunit protein bL33 from Polaromonas naphthalenivorans (strain CJ2).